The following is a 147-amino-acid chain: D-aminoacyl-tRNA deacylase (147 aa).

The short motif at 136–137 (GP) is the Gly-cisPro motif, important for rejection of L-amino acids element.

It belongs to the DTD family. As to quaternary structure, homodimer.

Its subcellular location is the cytoplasm. It catalyses the reaction glycyl-tRNA(Ala) + H2O = tRNA(Ala) + glycine + H(+). The catalysed reaction is a D-aminoacyl-tRNA + H2O = a tRNA + a D-alpha-amino acid + H(+). Its function is as follows. An aminoacyl-tRNA editing enzyme that deacylates mischarged D-aminoacyl-tRNAs. Also deacylates mischarged glycyl-tRNA(Ala), protecting cells against glycine mischarging by AlaRS. Acts via tRNA-based rather than protein-based catalysis; rejects L-amino acids rather than detecting D-amino acids in the active site. By recycling D-aminoacyl-tRNA to D-amino acids and free tRNA molecules, this enzyme counteracts the toxicity associated with the formation of D-aminoacyl-tRNA entities in vivo and helps enforce protein L-homochirality. The polypeptide is D-aminoacyl-tRNA deacylase (Streptococcus equi subsp. zooepidemicus (strain H70)).